Reading from the N-terminus, the 260-residue chain is Flagellar basal-body rod protein FlgG (260 aa).

The protein belongs to the flagella basal body rod proteins family. The basal body constitutes a major portion of the flagellar organelle and consists of four rings (L,P,S, and M) mounted on a central rod. The rod consists of about 26 subunits of FlgG in the distal portion, and FlgB, FlgC and FlgF are thought to build up the proximal portion of the rod with about 6 subunits each.

The protein localises to the bacterial flagellum basal body. The sequence is that of Flagellar basal-body rod protein FlgG (flgG) from Escherichia coli O157:H7.